The following is a 536-amino-acid chain: MILLSFVSDSNVGTGEKKVTEAWISEDENSHRTTSDRLTVMELPSPESEEVHEPRLGELLGNPEGQSLGSSPSQDRGCKQVTVTHWKIQTGETAQVCTKSGRNHILNSDLLLLQRELIEGEANPCDICGKTFTFNSDLVRHRISHAGEKPYTCDQCGKGFGQSSHLMEHQRIHTGERLYVCNVCGKDFIHYSGLIEHQRVHSGEKPFKCAQCGKAFCHSSDLIRHQRVHTRERPFECKECGKGFSQSSLLIRHQRIHTGERPYECNECGKSFIRSSSLIRHYQIHTEVKQYECKECGKAFRHRSDLIEHQRIHTGERPFECNECGKAFIRSSKLIQHQRIHTGERPYVCNECGKRFSQTSNFTQHQRIHTGEKLYECNECGKAFFLSSYLIRHQKIHTGERVYECKECGKAFLQKAHLTEHQKIHSGDRPFECKDCGKAFIQSSKLLLHQIIHTGEKPYVCSYCGKGFIQRSNFLQHQKIHTEEKLYECSQYGRDFNSTTNVKNNQRVHQEGLSLSKAPIHLGERSVDKGEHTGNL.

The disordered stretch occupies residues 57 to 77; that stretch reads GELLGNPEGQSLGSSPSQDRG. The segment covering 64-74 has biased composition (polar residues); sequence EGQSLGSSPSQ. C2H2-type zinc fingers lie at residues 123–145, 151–173, 179–201, 207–229, 235–257, 263–285, 291–313, 319–341, 347–369, 375–397, 403–425, 431–453, and 459–481; these read NPCD…RISH, YTCD…QRIH, YVCN…QRVH, FKCA…QRVH, FECK…QRIH, YECN…YQIH, YECK…QRIH, FECN…QRIH, YVCN…QRIH, YECN…QKIH, YECK…QKIH, FECK…QIIH, and YVCS…QKIH. A Glycyl lysine isopeptide (Lys-Gly) (interchain with G-Cter in SUMO2) cross-link involves residue K445. The tract at residues 513-536 is disordered; sequence LSLSKAPIHLGERSVDKGEHTGNL. Residues 522–536 show a composition bias toward basic and acidic residues; it reads LGERSVDKGEHTGNL.

It belongs to the krueppel C2H2-type zinc-finger protein family.

The protein resides in the nucleus. May be involved in transcriptional regulation. The polypeptide is Zinc finger protein 623 (ZNF623) (Homo sapiens (Human)).